The following is an 89-amino-acid chain: Large ribosomal subunit protein eL37A (89 aa).

The Zn(2+) site is built by Cys-19, Cys-22, Cys-34, and Cys-37. A C4-type zinc finger spans residues 19 to 37; the sequence is CRRCGKRSFHIQKSTCACC.

Belongs to the eukaryotic ribosomal protein eL37 family. In terms of assembly, component of the large ribosomal subunit (LSU). Mature yeast ribosomes consist of a small (40S) and a large (60S) subunit. The 40S small subunit contains 1 molecule of ribosomal RNA (18S rRNA) and at least 33 different proteins. The large 60S subunit contains 3 rRNA molecules (25S, 5.8S and 5S rRNA) and at least 46 different proteins. Zn(2+) serves as cofactor.

Its subcellular location is the cytoplasm. Its function is as follows. Component of the ribosome, a large ribonucleoprotein complex responsible for the synthesis of proteins in the cell. The small ribosomal subunit (SSU) binds messenger RNAs (mRNAs) and translates the encoded message by selecting cognate aminoacyl-transfer RNA (tRNA) molecules. The large subunit (LSU) contains the ribosomal catalytic site termed the peptidyl transferase center (PTC), which catalyzes the formation of peptide bonds, thereby polymerizing the amino acids delivered by tRNAs into a polypeptide chain. The nascent polypeptides leave the ribosome through a tunnel in the LSU and interact with protein factors that function in enzymatic processing, targeting, and the membrane insertion of nascent chains at the exit of the ribosomal tunnel. This is Large ribosomal subunit protein eL37A (rpl3703) from Schizosaccharomyces pombe (strain 972 / ATCC 24843) (Fission yeast).